A 216-amino-acid chain; its full sequence is Large ribosomal subunit protein eL15 (216 aa).

A compositionally biased stretch (basic residues) spans 170-188 (RGLRKSKGFKGTVKHKWSR). The disordered stretch occupies residues 170 to 201 (RGLRKSKGFKGTVKHKWSRKQKEREEKKRHEA). The segment covering 189–201 (KQKEREEKKRHEA) has biased composition (basic and acidic residues).

This sequence belongs to the eukaryotic ribosomal protein eL15 family.

This Saccharolobus islandicus (strain M.16.27) (Sulfolobus islandicus) protein is Large ribosomal subunit protein eL15.